Consider the following 335-residue polypeptide: Teichoic acids export ATP-binding protein TagH (335 aa).

Residues 26–246 (IKGLFMPKSQ…YDEFVKWFNK (221 aa)) enclose the ABC transporter domain. 60 to 67 (GINGSGKS) contributes to the ATP binding site.

It belongs to the ABC transporter superfamily. Teichoic acids exporter (TC 3.A.1.104.1) family. In terms of assembly, the complex is composed of two ATP-binding proteins (TagH) and two transmembrane proteins (TagG).

It is found in the cell membrane. It carries out the reaction ATP + H2O + teichoic acidSide 1 = ADP + phosphate + teichoic acidSide 2.. In terms of biological role, part of the ABC transporter complex TagGH involved in teichoic acids export. Responsible for energy coupling to the transport system. This chain is Teichoic acids export ATP-binding protein TagH, found in Listeria innocua serovar 6a (strain ATCC BAA-680 / CLIP 11262).